Here is a 1188-residue protein sequence, read N- to C-terminus: AT-rich interactive domain-containing protein 5B (1188 aa).

Residue lysine 130 forms a Glycyl lysine isopeptide (Lys-Gly) (interchain with G-Cter in SUMO2) linkage. The interval 251-277 (RPRKKKPCPQRRDSFSGVKDSNNNSDG) is disordered. Phosphoserine is present on serine 264. The 93-residue stretch at 318-410 (RADEQAFLVA…LILPYERFIK (93 aa)) folds into the ARID domain. Lysine 336 is modified (N6,N6-dimethyllysine). Residues 412-611 (EEDKPLPPIK…QPPLANQNET (200 aa)) form a disordered region. A Glycyl lysine isopeptide (Lys-Gly) (interchain with G-Cter in SUMO2) cross-link involves residue lysine 445. Over residues 446 to 458 (HEIPKSKKEKENA) the composition is skewed to basic and acidic residues. Glycyl lysine isopeptide (Lys-Gly) (interchain with G-Cter in SUMO2) cross-links involve residues lysine 494 and lysine 496. Positions 597–609 (SFPTTQPPLANQN) are enriched in polar residues. Glycyl lysine isopeptide (Lys-Gly) (interchain with G-Cter in SUMO2) cross-links involve residues lysine 767, lysine 774, lysine 803, and lysine 810. Disordered stretches follow at residues 846–874 (HHLH…PSHR) and 891–918 (DKKS…HKPT). Basic and acidic residues predominate over residues 847–866 (HLHNEQTSKYPSRDMYRESE). Glycyl lysine isopeptide (Lys-Gly) (interchain with G-Cter in SUMO2) cross-links involve residues lysine 893, lysine 916, lysine 920, and lysine 935. A disordered region spans residues 956-978 (RVSPMTMSGPKKYPESLSRSGKP). Glycyl lysine isopeptide (Lys-Gly) (interchain with G-Cter in SUMO2) cross-links involve residues lysine 988, lysine 1000, and lysine 1013. The tract at residues 1028 to 1070 (ARAVSPLDPSKEVSGKEKASEQESEGSKAAHGGHSGGGSEGHK) is disordered. Serine 1032 bears the Phosphoserine mark. A compositionally biased stretch (basic and acidic residues) spans 1036-1055 (PSKEVSGKEKASEQESEGSK). Residues lysine 1055 and lysine 1070 each participate in a glycyl lysine isopeptide (Lys-Gly) (interchain with G-Cter in SUMO2) cross-link. Position 1133 is a phosphoserine (serine 1133).

It belongs to the ARID5B family. In terms of processing, methylation at Lys-336 prevents DNA-binding. Demethylation by PHF2 promotes recruitment of the PHF2-ARID5B complex to promoters. As to expression, widely expressed, including in liver (at protein level).

It localises to the nucleus. Functionally, transcription coactivator that binds to the 5'-AATA[CT]-3' core sequence and plays a key role in adipogenesis and liver development. Acts by forming a complex with phosphorylated PHF2, which mediates demethylation at Lys-336, leading to target the PHF2-ARID5B complex to target promoters, where PHF2 mediates demethylation of dimethylated 'Lys-9' of histone H3 (H3K9me2), followed by transcription activation of target genes. The PHF2-ARID5B complex acts as a coactivator of HNF4A in liver. Required for adipogenesis: regulates triglyceride metabolism in adipocytes by regulating expression of adipogenic genes. Overexpression leads to induction of smooth muscle marker genes, suggesting that it may also act as a regulator of smooth muscle cell differentiation and proliferation. Represses the cytomegalovirus enhancer. This chain is AT-rich interactive domain-containing protein 5B (ARID5B), found in Homo sapiens (Human).